The chain runs to 333 residues: MNTDVIIIGAGPVGIFTAFQAGMLGMRAHVIDSLLSIGGQCTALYPEKFIYDIPGYKQITAAALISNLAEQAERFNPTYHTDQFATHMDRLDTSFVVKTSKEIEITAKAVIIAAGAGAFDYNRIPIESSHVYEGKSLFYSVKDPSIFTSKVVVIAGGGDSAADWGLILSKLARKVYLIHRRSKFRCSDSTFKDLKSLEETKKLKILTPYQITGLRGSGGQISHIELGGLTGESVTLEADYLLAFFGLKPSLRHLEEWGIEITHNCINVDPLTCSTNIKGVYAVGDVAHYDSKLKLILSGFSEAATACHHIRETIIGGDVYNFRYSTNMNEVFR.

Positions 32, 40, 45, 85, 119, 285, and 326 each coordinate FAD.

It belongs to the ferredoxin--NADP reductase type 2 family. Homodimer. Requires FAD as cofactor.

The catalysed reaction is 2 reduced [2Fe-2S]-[ferredoxin] + NADP(+) + H(+) = 2 oxidized [2Fe-2S]-[ferredoxin] + NADPH. The sequence is that of Ferredoxin--NADP reductase from Neorickettsia sennetsu (strain ATCC VR-367 / Miyayama) (Ehrlichia sennetsu).